Here is a 116-residue protein sequence, read N- to C-terminus: uncharacterized protein (116 aa).

The next 2 helical transmembrane spans lie at 40-60 (AIVK…IGIL) and 72-92 (FLGS…VVPI).

The protein resides in the membrane. This is an uncharacterized protein from Saccharomyces cerevisiae (strain ATCC 204508 / S288c) (Baker's yeast).